A 326-amino-acid chain; its full sequence is Holliday junction branch migration complex subunit RuvB (326 aa).

The interval 1-180 (MKSISCGKEY…FGIPLHLEFY (180 aa)) is large ATPase domain (RuvB-L). ATP-binding positions include isoleucine 19, arginine 20, glycine 61, lysine 64, threonine 65, threonine 66, 127–129 (EDF), arginine 170, tyrosine 180, and arginine 217. Threonine 65 is a binding site for Mg(2+). The segment at 181–251 (SFEELVNIIK…VADSVLLKLG (71 aa)) is small ATPAse domain (RuvB-S). Residues 254 to 326 (KMGLNKLDMN…QAKEYLSFQH (73 aa)) form a head domain (RuvB-H) region. DNA-binding residues include arginine 307 and arginine 312.

It belongs to the RuvB family. In terms of assembly, homohexamer. Forms an RuvA(8)-RuvB(12)-Holliday junction (HJ) complex. HJ DNA is sandwiched between 2 RuvA tetramers; dsDNA enters through RuvA and exits via RuvB. An RuvB hexamer assembles on each DNA strand where it exits the tetramer. Each RuvB hexamer is contacted by two RuvA subunits (via domain III) on 2 adjacent RuvB subunits; this complex drives branch migration. In the full resolvosome a probable DNA-RuvA(4)-RuvB(12)-RuvC(2) complex forms which resolves the HJ.

It localises to the cytoplasm. It carries out the reaction ATP + H2O = ADP + phosphate + H(+). The RuvA-RuvB-RuvC complex processes Holliday junction (HJ) DNA during genetic recombination and DNA repair, while the RuvA-RuvB complex plays an important role in the rescue of blocked DNA replication forks via replication fork reversal (RFR). RuvA specifically binds to HJ cruciform DNA, conferring on it an open structure. The RuvB hexamer acts as an ATP-dependent pump, pulling dsDNA into and through the RuvAB complex. RuvB forms 2 homohexamers on either side of HJ DNA bound by 1 or 2 RuvA tetramers; 4 subunits per hexamer contact DNA at a time. Coordinated motions by a converter formed by DNA-disengaged RuvB subunits stimulates ATP hydrolysis and nucleotide exchange. Immobilization of the converter enables RuvB to convert the ATP-contained energy into a lever motion, pulling 2 nucleotides of DNA out of the RuvA tetramer per ATP hydrolyzed, thus driving DNA branch migration. The RuvB motors rotate together with the DNA substrate, which together with the progressing nucleotide cycle form the mechanistic basis for DNA recombination by continuous HJ branch migration. Branch migration allows RuvC to scan DNA until it finds its consensus sequence, where it cleaves and resolves cruciform DNA. This is Holliday junction branch migration complex subunit RuvB from Wolbachia pipientis wMel.